The chain runs to 215 residues: Ribonuclease T (215 aa).

The 175-residue stretch at 20 to 194 (VVIDVETAGF…YDTERTAVLF (175 aa)) folds into the Exonuclease domain. Asp23, Glu25, His181, and Asp186 together coordinate Mg(2+). His181 functions as the Proton donor/acceptor in the catalytic mechanism.

Belongs to the RNase T family. Homodimer. The cofactor is Mg(2+).

Functionally, trims short 3' overhangs of a variety of RNA species, leaving a one or two nucleotide 3' overhang. Responsible for the end-turnover of tRNA: specifically removes the terminal AMP residue from uncharged tRNA (tRNA-C-C-A). Also appears to be involved in tRNA biosynthesis, especially in strains lacking other exoribonucleases. A general regulator of small RNAs (sRNA), contributes to their degradation. Upon overexpression suppresses sRNA-mediated RhyB-silencing of multiple RNA targets; overexpression leads to nearly complete loss of RhyB sRNA. The protein is Ribonuclease T of Escherichia coli (strain K12).